The primary structure comprises 72 residues: Translation initiation factor IF-1 (72 aa).

One can recognise an S1-like domain in the interval 1–72 (MAKDDVIEVD…DKGRITFRYK (72 aa)).

This sequence belongs to the IF-1 family. In terms of assembly, component of the 30S ribosomal translation pre-initiation complex which assembles on the 30S ribosome in the order IF-2 and IF-3, IF-1 and N-formylmethionyl-tRNA(fMet); mRNA recruitment can occur at any time during PIC assembly.

Its subcellular location is the cytoplasm. In terms of biological role, one of the essential components for the initiation of protein synthesis. Stabilizes the binding of IF-2 and IF-3 on the 30S subunit to which N-formylmethionyl-tRNA(fMet) subsequently binds. Helps modulate mRNA selection, yielding the 30S pre-initiation complex (PIC). Upon addition of the 50S ribosomal subunit IF-1, IF-2 and IF-3 are released leaving the mature 70S translation initiation complex. This Wolinella succinogenes (strain ATCC 29543 / DSM 1740 / CCUG 13145 / JCM 31913 / LMG 7466 / NCTC 11488 / FDC 602W) (Vibrio succinogenes) protein is Translation initiation factor IF-1.